Consider the following 164-residue polypeptide: Photosystem II extrinsic protein V (164 aa).

The N-terminal stretch at M1–S27 is a signal peptide. Heme c is bound by residues C64, C67, H68, and H119.

The protein belongs to the cytochrome c family. PsbV subfamily. PSII is composed of 1 copy each of membrane proteins PsbA, PsbB, PsbC, PsbD, PsbE, PsbF, PsbH, PsbI, PsbJ, PsbK, PsbL, PsbM, PsbT, PsbY, PsbZ, Psb30/Ycf12, at least 3 peripheral proteins of the oxygen-evolving complex and a large number of cofactors. It forms dimeric complexes. The extrinsic subunits in red algae are PsbO (OEC33), PsbQ', cytochrome c-550 and PsbU. Heme c is required as a cofactor.

The protein resides in the plastid. The protein localises to the chloroplast thylakoid membrane. One of the extrinsic, lumenal subunits of photosystem II (PSII). PSII is a light-driven water plastoquinone oxidoreductase, using light energy to abstract electrons from H(2)O, generating a proton gradient subsequently used for ATP formation. The extrinsic proteins stabilize the structure of photosystem II oxygen-evolving complex (OEC), the ion environment of oxygen evolution and protect the OEC against heat-induced inactivation. The polypeptide is Photosystem II extrinsic protein V (Cyanidium caldarium (Red alga)).